Reading from the N-terminus, the 316-residue chain is MAEPLFLQSQMHKKIWGGNRLRKEFGYDIPSETTGEYWAISAHPNGVSVVKNGVYKGVPLDELYAEHRELFGNSKSSVFPLLTKILDANDWLSVQVHPDNAYALEHEGELGKTECWYVISADEGAEIIYGHEAKSKEELRQMIAAGDWDHLLTKIPVKAGDFFYVPSGTMHAIGKGIMILETQQSSDTTYRVYDFDRKDDQGRKRALHIEQSIDVLTIGKPANATPAWLSLQGLETTVLVSSPFFTVYKWQISGSVKMQQTAPYLLVSVLAGQGRITVGLEQYALRKGDHLILPNTIKSWQFDGDLEIIASHSNEC.

Positions 95, 97, 114, and 171 each coordinate Zn(2+). R191 is a catalytic residue.

The protein belongs to the mannose-6-phosphate isomerase type 1 family. Zn(2+) serves as cofactor.

The enzyme catalyses D-mannose 6-phosphate = D-fructose 6-phosphate. The polypeptide is Mannose-6-phosphate isomerase (pmi) (Streptococcus mutans serotype c (strain ATCC 700610 / UA159)).